A 116-amino-acid polypeptide reads, in one-letter code: U16-barytoxin-Tl1c (116 aa).

Residues methionine 1–alanine 20 form the signal peptide. Residues asparagine 21–asparagine 76 constitute a propeptide that is removed on maturation. Disulfide bonds link cysteine 75-cysteine 90, cysteine 82-cysteine 95, and cysteine 89-cysteine 110.

Belongs to the neurotoxin 14 (magi-1) family. 06 (ICK-Trit) subfamily. In terms of tissue distribution, expressed by the venom gland.

Its subcellular location is the secreted. Its function is as follows. Ion channel inhibitor. The sequence is that of U16-barytoxin-Tl1c from Trittame loki (Brush-footed trapdoor spider).